We begin with the raw amino-acid sequence, 344 residues long: Small ribosomal subunit protein uS3 (344 aa).

The region spanning 38–106 (LKAALRERLK…EVFIDIQEVH (69 aa)) is the KH type-2 domain. Positions 217 to 344 (PEPEPRREQR…QKPEGSGENQ (128 aa)) are disordered. 2 stretches are compositionally biased toward basic and acidic residues: residues 219-259 (PEPR…RGDR) and 335-344 (QKPEGSGENQ).

Belongs to the universal ribosomal protein uS3 family. As to quaternary structure, part of the 30S ribosomal subunit. Forms a tight complex with proteins S10 and S14.

Its function is as follows. Binds the lower part of the 30S subunit head. Binds mRNA in the 70S ribosome, positioning it for translation. This Solibacter usitatus (strain Ellin6076) protein is Small ribosomal subunit protein uS3.